A 121-amino-acid chain; its full sequence is RxLR effector protein PexRD2 (121 aa).

The N-terminal stretch at 1–18 is a signal peptide; that stretch reads MRLSYVFVVFAASLLVTA. Residues 38–56 carry the RxLR-dEER motif; it reads RLLRKHYTAAENDGDSEAR. A WY domain region spans residues 57-121; it reads ALNPEKMKTM…LNYVAEHTAV (65 aa).

It belongs to the RxLR effector family.

The protein resides in the secreted. It localises to the host cytoplasm. It is found in the host nucleus. Its function is as follows. Secreted effector involved in P.mirabilis colonization of host plants. May perturb the signaling of cell death associated with plant immunity, via interaction with a host MAP kinase. This Phytophthora mirabilis protein is RxLR effector protein PexRD2.